A 610-amino-acid chain; its full sequence is Methionine--tRNA ligase (610 aa).

Positions 12–22 match the 'HIGH' region motif; sequence PYANGPRHIGH. The Zn(2+) site is built by C144, C147, C157, and C160. The 'KMSKS' region signature appears at 348–352; sequence KFSSS. S351 is a binding site for ATP.

This sequence belongs to the class-I aminoacyl-tRNA synthetase family. MetG type 1 subfamily. Monomer. It depends on Zn(2+) as a cofactor.

The protein localises to the cytoplasm. It carries out the reaction tRNA(Met) + L-methionine + ATP = L-methionyl-tRNA(Met) + AMP + diphosphate. Functionally, is required not only for elongation of protein synthesis but also for the initiation of all mRNA translation through initiator tRNA(fMet) aminoacylation. This is Methionine--tRNA ligase from Corynebacterium glutamicum (strain R).